A 471-amino-acid chain; its full sequence is Ribulose bisphosphate carboxylase large chain (471 aa).

Lys5 is subject to N6,N6,N6-trimethyllysine. Substrate is bound by residues Asn114 and Thr164. The active-site Proton acceptor is Lys166. Residue Lys168 coordinates substrate. Positions 192, 194, and 195 each coordinate Mg(2+). Lys192 is subject to N6-carboxylysine. Residue His285 is the Proton acceptor of the active site. Substrate contacts are provided by Arg286, His318, and Ser370.

The protein belongs to the RuBisCO large chain family. Type I subfamily. Heterohexadecamer of 8 large chains and 8 small chains; disulfide-linked. The disulfide link is formed within the large subunit homodimers. Requires Mg(2+) as cofactor. In terms of processing, the disulfide bond which can form in the large chain dimeric partners within the hexadecamer appears to be associated with oxidative stress and protein turnover.

It localises to the plastid. Its subcellular location is the chloroplast. The enzyme catalyses 2 (2R)-3-phosphoglycerate + 2 H(+) = D-ribulose 1,5-bisphosphate + CO2 + H2O. It carries out the reaction D-ribulose 1,5-bisphosphate + O2 = 2-phosphoglycolate + (2R)-3-phosphoglycerate + 2 H(+). Its function is as follows. RuBisCO catalyzes two reactions: the carboxylation of D-ribulose 1,5-bisphosphate, the primary event in carbon dioxide fixation, as well as the oxidative fragmentation of the pentose substrate in the photorespiration process. Both reactions occur simultaneously and in competition at the same active site. This is Ribulose bisphosphate carboxylase large chain from Deppea grandiflora.